The chain runs to 192 residues: Glycerol-3-phosphate acyltransferase (192 aa).

5 consecutive transmembrane segments (helical) span residues 1 to 21 (MTSA…GVLL), 51 to 71 (LGAV…VLAV), 78 to 98 (PTVH…PVWL), 112 to 132 (VLLV…VAVF), and 155 to 175 (LTAR…LMLW).

Belongs to the PlsY family. Probably interacts with PlsX.

The protein resides in the cell inner membrane. The catalysed reaction is an acyl phosphate + sn-glycerol 3-phosphate = a 1-acyl-sn-glycero-3-phosphate + phosphate. It participates in lipid metabolism; phospholipid metabolism. Catalyzes the transfer of an acyl group from acyl-phosphate (acyl-PO(4)) to glycerol-3-phosphate (G3P) to form lysophosphatidic acid (LPA). This enzyme utilizes acyl-phosphate as fatty acyl donor, but not acyl-CoA or acyl-ACP. The chain is Glycerol-3-phosphate acyltransferase from Myxococcus xanthus (strain DK1622).